Reading from the N-terminus, the 321-residue chain is uncharacterized protein (321 aa).

The tract at residues 157–220 is disordered; it reads TLEQPIEEDF…EGAEEDSHEH (64 aa). Residues 161–214 are compositionally biased toward acidic residues; the sequence is PIEEDFDEQDENDQNERDEDDAEEQEEDEVEEEEEEQQEEEEGENDEELTEGAE. Positions 167 to 212 form a coiled coil; sequence DEQDENDQNERDEDDAEEQEEDEVEEEEEEQQEEEEGENDEELTEG.

This is an uncharacterized protein from Dictyostelium discoideum (Social amoeba).